The primary structure comprises 256 residues: Protein US2 homolog (256 aa).

3 disordered regions span residues 100–120 (TRRPPADGSKPGEPLRISPPP), 167–186 (STAAGAPGAPTGARLTRRRP), and 236–256 (VRRRRGGRGNGRERAPRCTIS). A compositionally biased stretch (low complexity) spans 167-180 (STAAGAPGAPTGAR). Over residues 245–256 (NGRERAPRCTIS) the composition is skewed to basic and acidic residues.

This sequence belongs to the herpesviridae US2 family.

The chain is Protein US2 homolog (28K) from Sus scrofa (Pig).